A 443-amino-acid chain; its full sequence is Trigger factor (443 aa).

The 86-residue stretch at 161–246 folds into the PPIase FKBP-type domain; it reads ADGVTITYHG…VISVTAPRLP (86 aa).

The protein belongs to the FKBP-type PPIase family. Tig subfamily.

The protein localises to the cytoplasm. The enzyme catalyses [protein]-peptidylproline (omega=180) = [protein]-peptidylproline (omega=0). In terms of biological role, involved in protein export. Acts as a chaperone by maintaining the newly synthesized protein in an open conformation. Functions as a peptidyl-prolyl cis-trans isomerase. The chain is Trigger factor from Nitrosococcus oceani (strain ATCC 19707 / BCRC 17464 / JCM 30415 / NCIMB 11848 / C-107).